The following is a 338-amino-acid chain: HLA class I histocompatibility antigen, alpha chain G (338 aa).

Positions 1–24 (MVVMAPRTLFLLLSGALTLTETWA) are cleaved as a signal peptide. The VL9 epitope stretch occupies residues 3-11 (VMAPRTLFL). An alpha-1 region spans residues 25 to 114 (GSHSMRYFSA…LRGYYNQSEA (90 aa)). Residues 25-308 (GSHSMRYFSA…KQSSLPTIPI (284 aa)) are Extracellular-facing. 4 residues coordinate a peptide antigen: Tyr-31, His-94, Asn-101, and Tyr-108. N-linked (GlcNAc...) asparagine glycosylation is present at Asn-110. An alpha-2 region spans residues 115 to 206 (SSHTLQWMIG…ENGKEMLQRA (92 aa)). Cys-125 and Cys-188 are joined by a disulfide. The a peptide antigen site is built by Ser-167, Lys-170, Gln-179, Arg-180, Tyr-183, and Tyr-195. An alpha-3 region spans residues 207-298 (DPPKTHVTHH…GLPEPLMLRW (92 aa)). Residues 209–299 (PKTHVTHHPV…LPEPLMLRWK (91 aa)) enclose the Ig-like C1-type domain. A disulfide bridge connects residues Cys-227 and Cys-283. The tract at residues 299 to 308 (KQSSLPTIPI) is connecting peptide. The helical transmembrane segment at 309–332 (MGIVAGLVVLAAVVTGAAVAAVLW) threads the bilayer. Topologically, residues 333–338 (RKKSSD) are cytoplasmic. The short motif at 334-336 (KKS) is the ER-retrieval signal element.

The protein belongs to the MHC class I family. As to quaternary structure, forms a heterotrimer with B2M and a self-peptide (peptide-bound HLA-G-B2M). HLA-G-B2M complex interacts with components of the antigen processing machinery TAPBP and TAP1-TAP2 complex; this interaction is required for loading of high affinity peptides and heterotrimer translocation to the cell surface. Interacts with CALCR; this interaction is required for appropriate folding. Interacts with COPB1; this interaction mediates the endoplasmic reticulum (ER) retrieval of HLA-G-B2M complexes that bind low affinity peptides. On the cell surface, peptide-bound HLA-G-B2M molecules (referred to as monomers) can form disulfide-linked homomultimers, homodimers and homotrimers. Interacts with KIR2DL4; this interaction is direct. Interacts with LILRB1 and LILRB2 receptors; this interaction is direct. Interacts with CD160; this interactions is direct. Interacts with CD8A homodimer; this interaction is direct and might down-regulate T cell receptor signaling. Isoform 2: Forms a non-disulfide-linked homodimer and interacts with LILRB2. N-glycosylated. Post-translationally, produced by proteolytic cleavage at the cell surface (shedding) by matrix metalloproteinase MMP2. In terms of tissue distribution, expressed in adult eye. Expressed in immune cell subsets including monocytes, myeloid and plasmacytoid dendritic cells and regulatory T cells (Tr1)(at protein level). Secreted by follicular dendritic cell and follicular helper T cells. Detected in physiological fluids including amniotic fluid and serum. As to expression, expressed in placenta, amniotic membrane, skin, cord blood and peripheral blood mononuclear cells.

Its subcellular location is the cell membrane. It localises to the endoplasmic reticulum membrane. The protein resides in the early endosome membrane. The protein localises to the secreted. It is found in the early endosome. Its subcellular location is the cell projection. It localises to the filopodium membrane. Non-classical major histocompatibility class Ib molecule involved in immune regulatory processes at the maternal-fetal interface. In complex with B2M/beta-2 microglobulin binds a limited repertoire of nonamer self-peptides derived from intracellular proteins including histones and ribosomal proteins. Peptide-bound HLA-G-B2M complex acts as a ligand for inhibitory/activating KIR2DL4, LILRB1 and LILRB2 receptors on uterine immune cells to promote fetal development while maintaining maternal-fetal tolerance. Upon interaction with KIR2DL4 and LILRB1 receptors on decidual NK cells, it triggers NK cell senescence-associated secretory phenotype as a molecular switch to promote vascular remodeling and fetal growth in early pregnancy. Through interaction with KIR2DL4 receptor on decidual macrophages induces pro-inflammatory cytokine production mainly associated with tissue remodeling. Through interaction with LILRB2 receptor triggers differentiation of type 1 regulatory T cells and myeloid-derived suppressor cells, both of which actively maintain maternal-fetal tolerance. May play a role in balancing tolerance and antiviral-immunity at maternal-fetal interface by keeping in check the effector functions of NK, CD8+ T cells and B cells. Reprograms B cells toward an immune suppressive phenotype via LILRB1. May induce immune activation/suppression via intercellular membrane transfer (trogocytosis), likely enabling interaction with KIR2DL4, which resides mostly in endosomes. Through interaction with the inhibitory receptor CD160 on endothelial cells may control angiogenesis in immune privileged sites. In terms of biological role, likely does not bind B2M and presents peptides. Negatively regulates NK cell- and CD8+ T cell-mediated cytotoxicity. Its function is as follows. Non-classical major histocompatibility class Ib molecule involved in immune regulatory processes at the maternal-fetal interface. In complex with B2M/beta-2 microglobulin binds a limited repertoire of nonamer self-peptides derived from intracellular proteins including histones and ribosomal proteins. Peptide-bound HLA-G-B2M complex acts as a ligand for inhibitory/activating KIR2DL4, LILRB1 and LILRB2 receptors on uterine immune cells to promote fetal development while maintaining maternal-fetal tolerance. Upon interaction with KIR2DL4 and LILRB1 receptors on decidual NK cells, it triggers NK cell senescence-associated secretory phenotype as a molecular switch to promote vascular remodeling and fetal growth in early pregnancy. Through interaction with KIR2DL4 receptor on decidual macrophages induces pro-inflammatory cytokine production mainly associated with tissue remodeling. Through interaction with LILRB2 receptor triggers differentiation of type 1 regulatory T cells and myeloid-derived suppressor cells, both of which actively maintain maternal-fetal tolerance. Reprograms B cells toward an immune suppressive phenotype via LILRB1. Functionally, likely does not bind B2M and presents peptides. This Homo sapiens (Human) protein is HLA class I histocompatibility antigen, alpha chain G.